The following is a 210-amino-acid chain: CLAVATA3/ESR (CLE)-related protein 4A-3 (210 aa).

The signal sequence occupies residues 1-21; that stretch reads MAKNAMLCLLILRVVLALAFA. The tract at residues 21–83 is required for secretion from the host cytoplasm to the host apoplasm; the sequence is ATNKKGDEEP…SNQLPNNNWM (63 aa). Asn32 carries N-linked (GlcNAc...) asparagine glycosylation. Positions 116 to 210 are disordered; the sequence is RKTGMHSQRH…APAGPDPIHH (95 aa). 2 stretches are compositionally biased toward basic and acidic residues: residues 125–137 and 144–200; these read HHEETTLEQEKRV and PIHH…EKRG. The A-1 repeat unit spans residues 127 to 135; it reads EETTLEQEK. The interval 127–198 is 4 X approximate repeat A; the sequence is EETTLEQEKR…HEDTTLEQEK (72 aa). Residues 136–147 form a CLE-1 repeat; it reads RVAGAGPDPIHH. The segment at 136–210 is 4 X approximate repeat CLE; that stretch reads RVAGAGPDPI…APAGPDPIHH (75 aa). The stretch at 148-156 is one A-2 repeat; it reads QDTTLEQEK. The stretch at 157–168 is one CLE-2 repeat; that stretch reads RAVPAGPDPKHH. One copy of the A-3 repeat lies at 169 to 177; that stretch reads EETTLEQEK. Residues 178–189 form a CLE-3 repeat; sequence RAVPAGPDPKHH. The A-4 repeat unit spans residues 190–198; it reads EDTTLEQEK. The stretch at 199 to 210 is one CLE-4 repeat; that stretch reads RGAPAGPDPIHH.

The protein belongs to the CLV3/ESR signal peptide family. In terms of tissue distribution, highly expressed exclusively within the dorsal esophageal gland cell during syncytium formation in host plants.

The protein localises to the secreted. The protein resides in the host cytoplasm. Its subcellular location is the host extracellular space. It localises to the extracellular space. It is found in the apoplast. Functionally, mimics host plant CLE extracellular signal peptides that regulate cell fate. May play a role in the differentiation or division of feeding cells (syncytia) induced in plant roots during infection. In Globodera rostochiensis (Golden nematode worm), this protein is CLAVATA3/ESR (CLE)-related protein 4A-3 (CLE-4A-3).